Here is a 293-residue protein sequence, read N- to C-terminus: Tumor necrosis factor receptor type 1-associated DEATH domain protein (293 aa).

The Nuclear export signal signature appears at leucine 156–serine 171. Residues threonine 200–glutamine 290 form the Death domain. Positions lysine 216–leucine 229 match the Nuclear localization signal motif.

As to quaternary structure, heterodimer with tnfrsf1a.

The protein resides in the nucleus. It localises to the cytoplasm. Its subcellular location is the cytoskeleton. In terms of biological role, adapter molecule for tnfrsf1a that specifically associates with the cytoplasmic domain of activated tnfrsf1a mediating its interaction with fadd. This Danio rerio (Zebrafish) protein is Tumor necrosis factor receptor type 1-associated DEATH domain protein.